Consider the following 66-residue polypeptide: Alpha-conotoxin Vc1a (66 aa).

The signal sequence occupies residues Met-1–Gly-25. Residues Arg-26–Lys-47 constitute a propeptide that is removed on maturation. 2 disulfide bridges follow: Cys-51–Cys-57 and Cys-52–Cys-65. Residues Ser-53–Pro-55 are ser-Xaa-Pro motif, crucial for potent interaction with nAChR. 2 key region for inhibition of alpha-9-alpha-10/CHRNA9-CHRNA10 nAChR regions span residues Asp-54–Arg-56 and Asp-60–Ile-64. The residue at position 55 (Pro-55) is a 4-hydroxyproline. A 4-carboxyglutamate modification is found at Glu-63. Cysteine amide is present on Cys-65.

The protein belongs to the conotoxin A superfamily. Post-translationally, vc1.1 is described as having no post-translational modifications (except C-terminal amidation), whereas Vc1a contains a hydroxyproline at Pro-55 and a 4-carboxyglutamate at Glu-63 (and a C-terminal amidation). Hydroxylation of Pro-55 is not important for inhibition of alpha-9-alpha-10/CHRNA9-CHRNA10 nAChRs, since [P6O]Vc1.1 (Pro-55 hydroxylated) shows similar inhibition than native toxin (IC(50)=99.1 nM). In contrast, hydroxylation of Pro-55 seems to impair inhibition of HVA calcium channel currents, since [P6O]Vc1.1 has no effect on HVA calcium channel currents. In vivo, hydroxylation of Pro-55 seems to induce the loss of analgesic effects in rat models of neuropathic pain, since [P6O]Vc1.1 has no effect on mechanical allodynia. In terms of processing, gamma-carboxylation of Glu-63 is not important for inhibition of alpha-9-alpha-10/CHRNA9-CHRNA10 nAChRs, since [E14gamma]Vc1.1 (carboxyglutamate at Glu-63) shows similar inhibition than native toxin (IC(50)=65.3 nM). In contrast, gamma-carboxylation of Glu-63 seems to impair inhibition of HVA calcium channel currents, since [E14gamma]Vc1.1 has no effect on HVA calcium channel currents. Post-translationally, non-native isomers 'ribbon' (with disulfide connectivity C1-C4; C2-C3) and 'beads' (with disulfide connectivity C1-C2; C3-C4) of Vc1.1 also inhibit HVA calcium channel currents in rat DRG neurons (20-30% inhibition at 1 uM toxin). It has been shown that both reduced and alkylated Vc1.1 have no effect on HVA calcium channel currents. The observed activity can be attributed to specific isomers. [C3S]Vc1.1(1-8) mutant is C-terminally amidated. In terms of tissue distribution, expressed by the venom duct.

Its subcellular location is the secreted. In terms of biological role, alpha-conotoxins act on postsynaptic membranes, they bind to the nicotinic acetylcholine receptors (nAChR) and thus inhibit them. This toxin (native toxin Vc1a; hydroxylated and gamma-carboxylated) blocks alpha-9-alpha-10/CHRNA9-CHRNA10 nAChRs (IC(50)=62.9 nM). In contrast to the non-post-translationally modified analog Vc1.1, Vc1a does not inhibit high voltage-activated (HVA) calcium channel currents. In vivo, in contrast to Vc1.1, Vc1a does not show analgesic effects in rat models of neuropathic pain. The synthetic peptide Vc1.1 (a non-hydroxylated and non-gamma-carboxylated analog of Vc1a) has two types of targets. It blocks alpha-9-alpha-10/CHRNA9-CHRNA10 nAChRs (on rat receptors, IC(50)=19-109 nM) (with preference for rat over human receptors) and inhibits high voltage-activated (HVA) calcium channel (Cav2.2, Cav2.3) currents by acting on GABA(B) receptors (GABBR1 and GABBR2) (IC(50)=1.7 nM). It also shows moderate inhibition on alpha-6/alpha-3-beta-2-beta-3 (CHRNA6/CHRNA3-CHRNB2-CHRNB3) (IC(50)=140 nM) and alpha-6/alpha-3-beta-4 (CHRNA6/CHRNA3-CHRNB4) (IC(50)=980 nM). On alpha-9-alpha-10/CHRNA9-CHRNA10 nAChR, it most likely interacts with the alpha-10(+)/alpha-9(-)interface of the receptor. In vivo, it acts as a powerful analgesic in rat models of neuropathic pain. In Conus victoriae (Queen Victoria cone), this protein is Alpha-conotoxin Vc1a.